The sequence spans 468 residues: Mitochondrial adenyl nucleotide antiporter SLC25A23 (468 aa).

Residues 1 to 149 are regulatory N-terminal domain; it reads MRGSPGDAER…DHFLLHSLEN (149 aa). The Mitochondrial intermembrane segment spans residues 1–188; it reads MRGSPGDAER…EKLTGMWWKQ (188 aa). The EF-hand 1 domain maps to 9-44; it reads ERRQRWGRLFEELDSNKDGRVDVHELRQGLARLGGG. The Ca(2+) site is built by Asp-22, Asn-24, Asp-26, Arg-28, and Glu-33. Residues 34-67 form a disordered region; it reads LRQGLARLGGGNPDPGAQQGISSEGDADPDGGLD. Residues 58–67 show a composition bias toward acidic residues; sequence GDADPDGGLD. 2 EF-hand domains span residues 77–112 and 113–148; these read EREQRLLLMFHSLDRNQDGHIDVSEIQQSFRALGIS and ISLEQAEKILHSMDRDGTMTIDWQEWRDHFLLHSLE. Ca(2+) contacts are provided by Asp-90, Asn-92, Asp-94, His-96, and Glu-101. The linker region stretch occupies residues 150–159; sequence VEDVLYFWKH. The C-terminal transmembrane transporter domain stretch occupies residues 165–468; that stretch reads IGECLTVPDE…MKQALGVTSR (304 aa). 3 Solcar repeats span residues 183-269, 277-362, and 374-462; these read GMWW…IKRA, LHVQ…LKNW, and PGIL…MKQA. Residues 189–206 form a helical membrane-spanning segment; sequence LVAGAVAGAVSRTGTAPL. The Mitochondrial matrix portion of the chain corresponds to 207–243; sequence DRLKVFMQVHASKTNRLNILGGLRSMVLEGGIRSLWR. Residues 244 to 263 form a helical membrane-spanning segment; it reads GNGINVLKIAPESAIKFMAY. At 264–286 the chain is on the mitochondrial intermembrane side; it reads EQIKRAILGQQETLHVQERFVAG. Residues 287–300 form a helical membrane-spanning segment; the sequence is SLAGATAQTIIYPM. Topologically, residues 301–336 are mitochondrial matrix; that stretch reads EVLKTRLTLRRTGQYKGLLDCARRILEREGPRAFYR. Residues 337–356 traverse the membrane as a helical segment; sequence GYLPNVLGIIPYAGIDLAVY. Topologically, residues 357–379 are mitochondrial intermembrane; sequence ETLKNWWLQQYSHDSADPGILVL. The chain crosses the membrane as a helical span at residues 380 to 397; that stretch reads LACGTISSTCGQIASYPL. Residues 398-436 are Mitochondrial matrix-facing; the sequence is ALVRTRMQAQASIEGGPQLSMLGLLRHILSQEGMRGLYR. The helical transmembrane segment at 437 to 456 threads the bilayer; the sequence is GIAPNFMKVIPAVSISYVVY. The Mitochondrial intermembrane segment spans residues 457 to 468; that stretch reads ENMKQALGVTSR.

The protein belongs to the mitochondrial carrier (TC 2.A.29) family. Interacts with MCU. Interacts with MICU1. In terms of tissue distribution, expressed at low levels in most tissues examined, with highest expression in brain, skeletal muscle and pancreas.

Its subcellular location is the mitochondrion inner membrane. It carries out the reaction Mg(2+)(out) + phosphate(in) + ATP(out) = Mg(2+)(in) + phosphate(out) + ATP(in). It catalyses the reaction ADP(out) + phosphate(in) + H(+)(out) = ADP(in) + phosphate(out) + H(+)(in). The enzyme catalyses AMP(out) + phosphate(in) = AMP(in) + phosphate(out). The catalysed reaction is phosphate(in) + ATP(out) + 2 H(+)(out) = phosphate(out) + ATP(in) + 2 H(+)(in). It carries out the reaction dADP(in) + ADP(out) = dADP(out) + ADP(in). It catalyses the reaction Mg(2+)(in) + ADP(out) + ATP(in) + H(+)(out) = Mg(2+)(out) + ADP(in) + ATP(out) + H(+)(in). The enzyme catalyses ADP(out) + diphosphate(in) = ADP(in) + diphosphate(out). The catalysed reaction is dAMP(in) + ADP(out) + H(+)(out) = dAMP(out) + ADP(in) + H(+)(in). It carries out the reaction 3'-AMP(in) + ADP(out) + H(+)(out) = 3'-AMP(out) + ADP(in) + H(+)(in). It catalyses the reaction dAMP(out) + phosphate(in) = dAMP(in) + phosphate(out). The enzyme catalyses 3'-AMP(out) + phosphate(in) = 3'-AMP(in) + phosphate(out). The catalysed reaction is dADP(out) + phosphate(in) + H(+)(out) = dADP(in) + phosphate(out) + H(+)(in). Activated by an increase in cytosolic calcium levels that induce a conformational change of the N-terminal regulatory domain, uncapping the channel and allowing transport. Inhibited by bathophenanthroline, mersalyl, p-hydroxymercuribenzoate, bromcresol purple, tannic acid, pyridoxal 5'-phosphate and p-hydroxymercuribenzoate. Electroneutral antiporter that mediates the transport of adenine nucleotides through the inner mitochondrial membrane. Originally identified as an ATP-magnesium/inorganic phosphate antiporter, it also acts as a broad specificity adenyl nucleotide antiporter. By regulating the mitochondrial matrix adenine nucleotide pool could adapt to changing cellular energetic demands and indirectly regulate adenine nucleotide-dependent metabolic pathways. Also acts as a regulator of mitochondrial calcium uptake and can probably transport trace amounts of other divalent metal cations in complex with ATP. In vitro, a low activity is also observed with guanyl and pyrimidine nucleotides. The chain is Mitochondrial adenyl nucleotide antiporter SLC25A23 from Homo sapiens (Human).